Consider the following 513-residue polypeptide: Putative zinc finger CCCH domain-containing protein 51 (513 aa).

A disordered region spans residues 155–180 (SMPRNSPNAGRNLVGHPHSSSKSSSK). The segment covering 170–180 (HPHSSSKSSSK) has biased composition (low complexity). The segment at 176-204 (KSSSKPCHFHFFRGYCKKGVNCQFFHGSV) adopts a C3H1-type zinc-finger fold. Residues 218–299 (SLSKLDMEIR…HGQYHVVLVE (82 aa)) form the HTH OST-type domain. In terms of domain architecture, RRM spans 325–411 (NQIYMTFPVH…SELRMTWLKS (87 aa)).

In Oryza sativa subsp. japonica (Rice), this protein is Putative zinc finger CCCH domain-containing protein 51.